A 393-amino-acid polypeptide reads, in one-letter code: Phosphoglycerate kinase (393 aa).

Substrate-binding positions include 21–23 (DLN), R36, 59–62 (HLGR), R114, and R147. ATP contacts are provided by residues K198, E320, and 346–349 (GGDT).

This sequence belongs to the phosphoglycerate kinase family. Monomer.

The protein resides in the cytoplasm. It catalyses the reaction (2R)-3-phosphoglycerate + ATP = (2R)-3-phospho-glyceroyl phosphate + ADP. It participates in carbohydrate degradation; glycolysis; pyruvate from D-glyceraldehyde 3-phosphate: step 2/5. The sequence is that of Phosphoglycerate kinase from Methylobacillus flagellatus (strain ATCC 51484 / DSM 6875 / VKM B-1610 / KT).